The following is a 629-amino-acid chain: Forkhead box protein O (629 aa).

Residue Thr49 is modified to Phosphothreonine; by PKB/AKT1. The residue at position 78 (Ser78) is a Phosphoserine. The segment at residues 98–204 (WGNLSYADLI…ETSRYEKRRG (107 aa)) is a DNA-binding region (fork-head). 5 disordered regions span residues 185-208 (KSVR…RAKK), 220-274 (GLND…SPIR), 321-368 (QQQF…QTLQ), 394-417 (SPNS…DSLN), and 563-597 (QHLQ…NSSL). Position 193 is a phosphoserine; by PKB/AKT1 (Ser193). Composition is skewed to polar residues over residues 224-233 (ATPSPSSSVS) and 259-268 (RASSNASSCG). Residue Ser262 is modified to Phosphoserine; by PKB/AKT1. Ser265, Ser266, and Ser271 each carry phosphoserine. The span at 332–341 (SQPPPPPYQP) shows a compositional bias: pro residues. Over residues 342–356 (PQLQQQQQQQPSYSL) the composition is skewed to low complexity. The segment covering 394-403 (SPNSVTTTMS) has biased composition (polar residues).

As to quaternary structure, interacts with melt.

Its subcellular location is the cytoplasm. The protein resides in the nucleus. Transcription factor involved in the regulation of the insulin signaling pathway. Consistently activates both the downstream target Thor\d4EBP and the feedback control target InR. Involved in negative regulation of the cell cycle, modulating cell growth and proliferation. In response to cellular stresses, such as nutrient deprivation or increased levels of reactive oxygen species, foxo is activated and inhibits growth through the action of target genes such as Thor. Foxo activated in the adult fat body can regulate lifespan in adults; an insulin peptide itself may function as one secondary messenger of insulin-regulated aging. Also regulates Lip4, homolog of human acid lipases, thereby acting as a key modulator of lipid metabolism by insulin signaling and integrates insulin responses to glucose and lipid homeostasis. This is Forkhead box protein O from Drosophila persimilis (Fruit fly).